A 734-amino-acid polypeptide reads, in one-letter code: 5-methyltetrahydropteroyltriglutamate--homocysteine methyltransferase (734 aa).

5-methyltetrahydropteroyltri-L-glutamate-binding positions include 15-18 (REFK) and Lys-104. L-homocysteine is bound by residues 409–411 (IGS) and Glu-462. Residues 409 to 411 (IGS) and Glu-462 each bind L-methionine. 5-methyltetrahydropteroyltri-L-glutamate is bound by residues 493-494 (RC) and Trp-539. Asp-577 is an L-homocysteine binding site. Residue Asp-577 participates in L-methionine binding. Residue Glu-583 participates in 5-methyltetrahydropteroyltri-L-glutamate binding. Residues His-618, Cys-620, and Glu-642 each coordinate Zn(2+). Catalysis depends on His-672, which acts as the Proton donor. Cys-704 is a binding site for Zn(2+).

The protein belongs to the vitamin-B12 independent methionine synthase family. The cofactor is Zn(2+).

It carries out the reaction 5-methyltetrahydropteroyltri-L-glutamate + L-homocysteine = tetrahydropteroyltri-L-glutamate + L-methionine. It functions in the pathway amino-acid biosynthesis; L-methionine biosynthesis via de novo pathway; L-methionine from L-homocysteine (MetE route): step 1/1. Its function is as follows. Catalyzes the transfer of a methyl group from 5-methyltetrahydrofolate to homocysteine resulting in methionine formation. This chain is 5-methyltetrahydropteroyltriglutamate--homocysteine methyltransferase, found in Thermotoga maritima (strain ATCC 43589 / DSM 3109 / JCM 10099 / NBRC 100826 / MSB8).